A 1584-amino-acid polypeptide reads, in one-letter code: Pentafunctional AROM polypeptide (1584 aa).

The tract at residues 1-384 (MSQDTDVVSV…YEKHATVVSD (384 aa)) is 3-dehydroquinate synthase. NAD(+) contacts are provided by residues 46 to 48 (DTN), 83 to 86 (ETSK), 114 to 116 (GGV), and Asp-119. 7-phospho-2-dehydro-3-deoxy-D-arabino-heptonate is bound at residue Arg-130. Residue 139-140 (TT) participates in NAD(+) binding. Residues Asp-146 and Lys-152 each contribute to the 7-phospho-2-dehydro-3-deoxy-D-arabino-heptonate site. Lys-161 contacts NAD(+). Asn-162 lines the 7-phospho-2-dehydro-3-deoxy-D-arabino-heptonate pocket. Residues 179–182 (FLET) and Asn-190 contribute to the NAD(+) site. Glu-194 is a Zn(2+) binding site. Residues 194-197 (EVIK) and Lys-250 each bind 7-phospho-2-dehydro-3-deoxy-D-arabino-heptonate. Glu-260 serves as the catalytic Proton acceptor; for 3-dehydroquinate synthase activity. 7-phospho-2-dehydro-3-deoxy-D-arabino-heptonate-binding positions include 264 to 268 (RNLLN) and His-271. Zn(2+) is bound at residue His-271. His-275 functions as the Proton acceptor; for 3-dehydroquinate synthase activity in the catalytic mechanism. 7-phospho-2-dehydro-3-deoxy-D-arabino-heptonate is bound by residues His-287 and Lys-356. Zn(2+) is bound at residue His-287. The segment at 397–843 (VSPFDNSVSD…WDVLRNSFKI (447 aa)) is EPSP synthase. Cys-825 functions as the For EPSP synthase activity in the catalytic mechanism. The shikimate kinase stretch occupies residues 863–1058 (RASVILIGMR…IQKPHSFFLS (196 aa)). ATP is bound at residue 870–877 (GMRGAGKT). The interval 1059-1280 (LTFPNINDAI…AAPGQLSVRQ (222 aa)) is 3-dehydroquinase. His-1182 functions as the Proton acceptor; for 3-dehydroquinate dehydratase activity in the catalytic mechanism. Residue Lys-1211 is the Schiff-base intermediate with substrate; for 3-dehydroquinate dehydratase activity of the active site. A shikimate dehydrogenase region spans residues 1293 to 1584 (PKKFYLFGTP…YMVLCAKEHN (292 aa)).

The protein in the N-terminal section; belongs to the sugar phosphate cyclases superfamily. Dehydroquinate synthase family. It in the 2nd section; belongs to the EPSP synthase family. This sequence in the 3rd section; belongs to the shikimate kinase family. In the 4th section; belongs to the type-I 3-dehydroquinase family. The protein in the C-terminal section; belongs to the shikimate dehydrogenase family. Homodimer. Requires Zn(2+) as cofactor.

Its subcellular location is the cytoplasm. The catalysed reaction is 7-phospho-2-dehydro-3-deoxy-D-arabino-heptonate = 3-dehydroquinate + phosphate. It catalyses the reaction 3-dehydroquinate = 3-dehydroshikimate + H2O. It carries out the reaction shikimate + NADP(+) = 3-dehydroshikimate + NADPH + H(+). The enzyme catalyses shikimate + ATP = 3-phosphoshikimate + ADP + H(+). The catalysed reaction is 3-phosphoshikimate + phosphoenolpyruvate = 5-O-(1-carboxyvinyl)-3-phosphoshikimate + phosphate. The protein operates within metabolic intermediate biosynthesis; chorismate biosynthesis; chorismate from D-erythrose 4-phosphate and phosphoenolpyruvate: step 2/7. It functions in the pathway metabolic intermediate biosynthesis; chorismate biosynthesis; chorismate from D-erythrose 4-phosphate and phosphoenolpyruvate: step 3/7. Its pathway is metabolic intermediate biosynthesis; chorismate biosynthesis; chorismate from D-erythrose 4-phosphate and phosphoenolpyruvate: step 4/7. It participates in metabolic intermediate biosynthesis; chorismate biosynthesis; chorismate from D-erythrose 4-phosphate and phosphoenolpyruvate: step 5/7. The protein operates within metabolic intermediate biosynthesis; chorismate biosynthesis; chorismate from D-erythrose 4-phosphate and phosphoenolpyruvate: step 6/7. In terms of biological role, the AROM polypeptide catalyzes 5 consecutive enzymatic reactions in prechorismate polyaromatic amino acid biosynthesis. The chain is Pentafunctional AROM polypeptide from Schizosaccharomyces japonicus (strain yFS275 / FY16936) (Fission yeast).